The following is a 196-amino-acid chain: Large ribosomal subunit protein bL20 (196 aa).

The protein belongs to the bacterial ribosomal protein bL20 family.

In terms of biological role, binds directly to 23S ribosomal RNA and is necessary for the in vitro assembly process of the 50S ribosomal subunit. It is not involved in the protein synthesizing functions of that subunit. The polypeptide is Large ribosomal subunit protein bL20 (rplT) (Oenococcus oeni (strain ATCC BAA-331 / PSU-1)).